The primary structure comprises 579 residues: Arginine--tRNA ligase (579 aa).

Positions 127–137 (ANPTGPLHVGH) match the 'HIGH' region motif.

This sequence belongs to the class-I aminoacyl-tRNA synthetase family. In terms of assembly, monomer.

The protein resides in the cytoplasm. It catalyses the reaction tRNA(Arg) + L-arginine + ATP = L-arginyl-tRNA(Arg) + AMP + diphosphate. This Acidithiobacillus ferrooxidans (strain ATCC 23270 / DSM 14882 / CIP 104768 / NCIMB 8455) (Ferrobacillus ferrooxidans (strain ATCC 23270)) protein is Arginine--tRNA ligase.